The primary structure comprises 123 residues: Cyclic ether formation enzyme xenC (123 aa).

The signal sequence occupies residues 1-24; the sequence is MSSLLLSDVLSYGIFGFSALCVQA. 2 consecutive transmembrane segments (helical) span residues 58–78 and 102–122; these read SALR…LWSP and LGES…AILV.

The protein belongs to the cyclic ether formation enzyme xenC family.

The protein resides in the membrane. The protein operates within mycotoxin biosynthesis. In terms of biological role, cyclic ether formation enzyme; part of the gene cluster that mediates the biosynthesis of xenoacremones such as xenoacremone A, a compound that shows inhibitory activity toward the PI3K/AKT signaling pathway and which has the ability to induce apoptosis of A549 lung cancer cells. Within the pathway, cooperation of the hybrid PKS-NRPS xenE and the trans-acting enoyl reductase xenG is responsible for the formation of the reduced tyrosine-nonaketide derivative. The alpha/beta hydrolase xenA then accelerates intramolecular nucleophilic attack to give a pyrrolidone derivative. Subsequently, three enzymes, xenF, xenD, and xenC, coordinately participate in the conversion to xenoacremone B. XenF catalyzes sigmatropic rearrangement to form an A-ring, which leads to an unusual intermediate with a hexane ring, which is required for the formation of the tricarbocyclic product. Epoxidation catalyzed by xenD and the formation of the paracyclophane ether catalyzed by xenC initiate a spontaneous intramolecular Diels-Alder (IMDA) reaction to yield xenoacremone B. Spontaneous hydration of xenoacremone B leads to the formation of xenoacremone A, which undergoes subsequent methylation to afford xenoacremone C. The chain is Cyclic ether formation enzyme xenC from Xenoacremonium sinensis (Endophyte fungus).